The primary structure comprises 400 residues: KKSDYIKLYVRRVFITDDFHDMMPKYLNFVKGVVDSDDLPLNVSRETLQQHKLLKVIRKKLVRKTLDMIKKIADEKYNDTFWKEFGTNIKLGVIEDHSNRTRLAKLLRFQSSHHSTDITSLDQYVERMKEKQDKIYFMAGSSRKEAESSPFVERLLKKGYEVIYLTEPVDEYCIQALPEFDGKRFQNVAKEGVKFDESEKTKENREATEKEFEPLLNWMKDKALKDKIEKAVVSQRLTESPCALVASQYGWSGNMERIMKAQAYQTGKDISTNYYASQKKTFEINPRHPLIRDMLRRVKEDEDDKTVLDLAVVLFETATLRSGYLLPDTKAYADRIERMLRLSLNIDPEAQVEEEPEEEPEDTTEDTEQDEEEEVDAGTEEEEEEEQETAKESTAEKDEL.

K1 bears the N6-succinyllysine mark. N-linked (GlcNAc...) asparagine glycosylation occurs at N42. Phosphoserine is present on S44. K76 is modified (N6-acetyllysine). 2 N-linked (GlcNAc...) asparagine glycosylation sites follow: N78 and N99. K230 is modified (N6-succinyllysine). The segment at 346 to 400 (IDPEAQVEEEPEEEPEDTTEDTEQDEEEEVDAGTEEEEEEEQETAKESTAEKDEL) is disordered. A compositionally biased stretch (acidic residues) spans 350–387 (AQVEEEPEEEPEDTTEDTEQDEEEEVDAGTEEEEEEEQ). At T379 the chain carries Phosphothreonine. Over residues 388–400 (ETAKESTAEKDEL) the composition is skewed to basic and acidic residues. Residues 397–400 (KDEL) carry the Prevents secretion from ER motif.

This sequence belongs to the heat shock protein 90 family. Homodimer; disulfide-linked. Component of an EIF2 complex at least composed of CELF1/CUGBP1, CALR, CALR3, EIF2S1, EIF2S2, HSP90B1 and HSPA5. Part of a large chaperone multiprotein complex comprising DNAJB11, HSP90B1, HSPA5, HYOU, PDIA2, PDIA4, PDIA6, PPIB, SDF2L1, UGGT1 and very small amounts of ERP29, but not, or at very low levels, CALR nor CANX. Interacts with AIMP1; regulates its retention in the endoplasmic reticulum. Hyperglycosylated form interacts with OS9; promoting its degradation by the endoplasmic reticulum associated degradation (ERAD). Interacts with CNPY3. This interaction is disrupted in the presence of ATP. Interacts with TLR4 and TLR9, but not with TLR3. Interacts with MZB1 in a calcium-dependent manner. Interacts with METTL23. Interacts with IL1B; the interaction facilitates cargo translocation into the ERGIC. Interacts with EIF2AK3. In terms of processing, phosphorylated by CK2. N-glycosylated cotranslationally at Asn-217 by STT3A-containing OST-A complex: this glycosylation is constitutive. In response to various stress, 5 additional facultative sites (Asn-62, Asn-107, Asn-445, Asn-481 and Asn-502) can be glycosylated post-translationally by STT3B-containing OST-B complex, leading to a hyperglycosylated form that is degraded by the ER-associated degradation (ERAD) pathway. In normal conditions, the OST-A complex together with CCDC134 prevent glycosylation at facultative sites during protein folding, thereby preventing hyperglycosylation. Mechanistically, nascent HSP90B1 is tethered during translation to a specialized CCDC134-containing translocon that forms a microenvironment for its folding, in which STT3A associates with the SRT pseudosubstrate motif, and prevents access to facultative glycosylation sites until folding is completed, rendering its facultative sites inaccessible to the OST-B complex.

Its subcellular location is the endoplasmic reticulum lumen. It is found in the sarcoplasmic reticulum lumen. The protein localises to the melanosome. It catalyses the reaction ATP + H2O = ADP + phosphate + H(+). Functionally, ATP-dependent chaperone involved in the processing of proteins in the endoplasmic reticulum, regulating their transport. Together with MESD, acts as a modulator of the Wnt pathway by promoting the folding of LRP6, a coreceptor of the canonical Wnt pathway. When associated with CNPY3, required for proper folding of Toll-like receptors. Promotes folding and trafficking of TLR4 to the cell surface. May participate in the unfolding of cytosolic leaderless cargos (lacking the secretion signal sequence) such as the interleukin 1/IL-1 to facilitate their translocation into the ERGIC (endoplasmic reticulum-Golgi intermediate compartment) and secretion; the translocation process is mediated by the cargo receptor TMED10. This Mesocricetus auratus (Golden hamster) protein is Endoplasmin (HSP90B1).